A 521-amino-acid chain; its full sequence is Maturase K (521 aa).

The protein belongs to the intron maturase 2 family. MatK subfamily.

It is found in the plastid. It localises to the chloroplast. Usually encoded in the trnK tRNA gene intron. Probably assists in splicing its own and other chloroplast group II introns. The chain is Maturase K from Anthericum liliago (St-Bernard's lily).